We begin with the raw amino-acid sequence, 154 residues long: uncharacterized protein (154 aa).

The disordered stretch occupies residues 91 to 154 (PSEESWGCRQ…WGSPQPSRGA (64 aa)). Polar residues predominate over residues 134–154 (SRDTSPLGGQSWGSPQPSRGA).

This is an uncharacterized protein from Homo sapiens (Human).